Here is a 263-residue protein sequence, read N- to C-terminus: Glucosamine-6-phosphate deaminase (263 aa).

Aspartate 72 serves as the catalytic Proton acceptor; for enolization step. Aspartate 141 functions as the For ring-opening step in the catalytic mechanism. The Proton acceptor; for ring-opening step role is filled by histidine 143. The active-site For ring-opening step is glutamate 148.

Belongs to the glucosamine/galactosamine-6-phosphate isomerase family. NagB subfamily.

It catalyses the reaction alpha-D-glucosamine 6-phosphate + H2O = beta-D-fructose 6-phosphate + NH4(+). The protein operates within amino-sugar metabolism; N-acetylneuraminate degradation; D-fructose 6-phosphate from N-acetylneuraminate: step 5/5. Its activity is regulated as follows. Allosterically activated by N-acetylglucosamine 6-phosphate (GlcNAc6P). Its function is as follows. Catalyzes the reversible isomerization-deamination of glucosamine 6-phosphate (GlcN6P) to form fructose 6-phosphate (Fru6P) and ammonium ion. The protein is Glucosamine-6-phosphate deaminase of Porphyromonas gingivalis (strain ATCC BAA-308 / W83).